A 41-amino-acid polypeptide reads, in one-letter code: Large ribosomal subunit protein bL36 (41 aa).

The protein belongs to the bacterial ribosomal protein bL36 family.

In Mesorhizobium japonicum (strain LMG 29417 / CECT 9101 / MAFF 303099) (Mesorhizobium loti (strain MAFF 303099)), this protein is Large ribosomal subunit protein bL36.